A 289-amino-acid polypeptide reads, in one-letter code: Light-independent protochlorophyllide reductase iron-sulfur ATP-binding protein (289 aa).

ATP contacts are provided by residues 10-15 (GIGKST) and lysine 39. Position 14 (serine 14) interacts with Mg(2+). Residues cysteine 95 and cysteine 129 each coordinate [4Fe-4S] cluster. 180–181 (NR) lines the ATP pocket.

The protein belongs to the NifH/BchL/ChlL family. As to quaternary structure, homodimer. Protochlorophyllide reductase is composed of three subunits; ChlL, ChlN and ChlB. Requires [4Fe-4S] cluster as cofactor.

It localises to the plastid. The protein resides in the chloroplast. The catalysed reaction is chlorophyllide a + oxidized 2[4Fe-4S]-[ferredoxin] + 2 ADP + 2 phosphate = protochlorophyllide a + reduced 2[4Fe-4S]-[ferredoxin] + 2 ATP + 2 H2O. It functions in the pathway porphyrin-containing compound metabolism; chlorophyll biosynthesis (light-independent). Functionally, component of the dark-operative protochlorophyllide reductase (DPOR) that uses Mg-ATP and reduced ferredoxin to reduce ring D of protochlorophyllide (Pchlide) to form chlorophyllide a (Chlide). This reaction is light-independent. The L component serves as a unique electron donor to the NB-component of the complex, and binds Mg-ATP. The chain is Light-independent protochlorophyllide reductase iron-sulfur ATP-binding protein from Marchantia polymorpha (Common liverwort).